A 245-amino-acid chain; its full sequence is Probable phosphatase ECA2529 (245 aa).

The Zn(2+) site is built by His7, His9, His15, His40, Glu73, His101, His131, Asp192, and His194.

It belongs to the PHP family. In terms of assembly, homotrimer. Zn(2+) serves as cofactor.

The sequence is that of Probable phosphatase ECA2529 from Pectobacterium atrosepticum (strain SCRI 1043 / ATCC BAA-672) (Erwinia carotovora subsp. atroseptica).